Consider the following 148-residue polypeptide: Large ribosomal subunit protein bL9 (148 aa).

The protein belongs to the bacterial ribosomal protein bL9 family.

In terms of biological role, binds to the 23S rRNA. The protein is Large ribosomal subunit protein bL9 of Staphylococcus epidermidis (strain ATCC 35984 / DSM 28319 / BCRC 17069 / CCUG 31568 / BM 3577 / RP62A).